We begin with the raw amino-acid sequence, 1177 residues long: MFELNNFDAIQIGLASPEQIREWSRGEVKKPETINYRTLKPEKDGLFCERIFGPMKDWECHCGKYKRVRYKGIVCDRCGVEVTKAKVRRERMGHIELAAPVSHIWYFKGIPSRMGLLMDMSPRALEKVLYFASYIVIDPKETPLLKKQLLNEKEYREAIDKYGEDSFVAGMGAEAIQDLLGQIDLIAGSKELKEDLKQSTGQKRVRIIRRLEVVESFAKSGNNPKWMIINVIPVIPPDLRPMVQLDGGRFATSDLNDLYRRVINRNNRLKKLLDLGAPDIIVRNEKRMLQEAVDALIDNGRRGRPVTGPGNRPLKSLSDMLKGKQGRFRQNLLGKRVDYSGRSVIVVGPELKMYQCGLPKEMALELFKPFVMKKLVQDGIAHNIKSAKRMVERVLPQVWDVLEEVITDHPVLLNRAPTLHRLGIQAFQPVLVEGRAIKLHPLACTAYNADFDGDQMAVHVPLSVEAQAEARFLMLAAGNILKPSDGKPVCVPTQDMVLGSYYLTMDRTGAKGEGMTFSNKDEAVMAYESKYIDIHAQINVRVYKEIDGVLKSGIIKTTVGKLIFNESIPQDLGFVNREDEKEKFNLEIDFLVTKKSLGKVIDQSYMLHGPTKTSIMLDNIKALGYHYSSIGAVTVAASDMIVPPVKYDLLHEADETIDKIEKMYKRGFISEDERYERVIEKWTKTTEEVADALMDSLDKFNPIYMMADSGARGSKSQIKQLAGMRGLMASPSGKILELPIRASFREGLDVLEYFISTHGARKGNADTALKTADSGYLTRRLVDVCQDVIVREEDCGTDNGIYVSEIKEGSEVIEELRERLIGRYTAEDVVDPNSGEIIVARNEYMNPIIADKVVSAGIKKVKIRSAFTCNCKIGVCAKCYGMNMATAKKIDIGEAVGIIAAQSIGEPGTQLTMRTFHTGGVAGSDITQGLPRVEELFEARKPKGLAIVSEIHGNVRIEETKKKRAVFVMGADGDERSYDIPFGSRLKVSDGDYIEAGDEITEGSVNPHDIMNIKGVDGARRYLLSEVQKVYRLQGVDINDKHLEVVVKQMTRKVKILESGDTELLPGIMIDIFDFQEANDKVREFGGEEAKGEQSLLGITKAALATDSFLSAASFQETTRVLTEAAIKGKVDPLIGLKENVIIGKLIPAGTGMMKYKGLNLNTKNEKIEENETEIVE.

Zn(2+) is bound by residues Cys60, Cys62, Cys75, and Cys78. Asp450, Asp452, and Asp454 together coordinate Mg(2+). 4 residues coordinate Zn(2+): Cys795, Cys869, Cys876, and Cys879.

It belongs to the RNA polymerase beta' chain family. The RNAP catalytic core consists of 2 alpha, 1 beta, 1 beta' and 1 omega subunit. When a sigma factor is associated with the core the holoenzyme is formed, which can initiate transcription. Mg(2+) is required as a cofactor. It depends on Zn(2+) as a cofactor.

It catalyses the reaction RNA(n) + a ribonucleoside 5'-triphosphate = RNA(n+1) + diphosphate. Its function is as follows. DNA-dependent RNA polymerase catalyzes the transcription of DNA into RNA using the four ribonucleoside triphosphates as substrates. This is DNA-directed RNA polymerase subunit beta' from Clostridium botulinum (strain Eklund 17B / Type B).